Consider the following 730-residue polypeptide: Zinc finger protein 615 (730 aa).

A KRAB domain is found at 7–78 (LTLEDVAVDF…EDEIYSRICF (72 aa)). C2H2-type zinc fingers lie at residues 203 to 225 (HVCS…QRVH), 231 to 253 (HVCS…QRTH), 259 to 281 (YECT…QKTH), 287 to 309 (YTCS…QRTH), 315 to 337 (HGCS…QKTH), 343 to 365 (YICS…HRTH), 371 to 393 (FICN…QQTH), 399 to 421 (YTCS…QRTH), 427 to 449 (YKCN…QRTH), 455 to 477 (YVCT…QRTH), 483 to 505 (YICN…QRTH), 511 to 533 (YVCG…QRTH), 539 to 561 (YICD…RRTH), 567 to 589 (YVCS…QRTH), 595 to 617 (YICN…QQTH), 623 to 645 (YKCN…QRFH), 651 to 673 (FACT…QRIH), 679 to 701 (YKCS…QRKH), and 707 to 729 (YGCS…KRIH).

Belongs to the krueppel C2H2-type zinc-finger protein family.

Its subcellular location is the nucleus. In terms of biological role, may be involved in transcriptional regulation. The protein is Zinc finger protein 615 (ZNF615) of Pongo abelii (Sumatran orangutan).